We begin with the raw amino-acid sequence, 87 residues long: Large ribosomal subunit protein bL27 (87 aa).

Residues 1 to 25 (MAHKKGASSSRNGRDSNAQRLGVKR) are disordered. Polar residues predominate over residues 7–19 (ASSSRNGRDSNAQ).

Belongs to the bacterial ribosomal protein bL27 family.

The chain is Large ribosomal subunit protein bL27 from Rhodococcus opacus (strain B4).